The chain runs to 239 residues: Myogenic factor 6 (239 aa).

The segment at 28 to 64 (HLDMSGVSPLYNGNDSPLSPGQDNVPSETGGESSGDE) is disordered. A compositionally biased stretch (polar residues) spans 38 to 58 (YNGNDSPLSPGQDNVPSETGG). Residues 96–147 (DRRKAATLRERRRLKKINEAFDALKRKTVANPNQRLPKVEILRSAISYIERL) form the bHLH domain. A disordered region spans residues 155–189 (DEQERSQSGASDTRNDKEQNRPSGGDYRWKKASNT).

As to quaternary structure, efficient DNA binding requires dimerization with another bHLH protein.

The protein resides in the nucleus. Involved in muscle differentiation (myogenic factor). Induces fibroblasts to differentiate into myoblasts. Probable sequence specific DNA-binding protein. In Takifugu rubripes (Japanese pufferfish), this protein is Myogenic factor 6 (myf6).